The primary structure comprises 707 residues: Polyribonucleotide nucleotidyltransferase (707 aa).

Positions 484 and 490 each coordinate Mg(2+). A KH domain is found at 551–610 (PRVVRMVVNPEKIRDIIGPAGKTITKIISETGVKIDIEEDGRLYITAPNLEAGERAKQMI). The S1 motif domain occupies 620–688 (GGIYLGKVLR…KLGRIVLSRK (69 aa)). The segment at 688–707 (KDAMPDEEESDNRKSDNRKK) is disordered. Over residues 698-707 (DNRKSDNRKK) the composition is skewed to basic and acidic residues.

Belongs to the polyribonucleotide nucleotidyltransferase family. Requires Mg(2+) as cofactor.

The protein localises to the cytoplasm. It catalyses the reaction RNA(n+1) + phosphate = RNA(n) + a ribonucleoside 5'-diphosphate. Its function is as follows. Involved in mRNA degradation. Catalyzes the phosphorolysis of single-stranded polyribonucleotides processively in the 3'- to 5'-direction. In Caldanaerobacter subterraneus subsp. tengcongensis (strain DSM 15242 / JCM 11007 / NBRC 100824 / MB4) (Thermoanaerobacter tengcongensis), this protein is Polyribonucleotide nucleotidyltransferase.